The primary structure comprises 141 residues: MSISSKFQLRSSTSLLLLVALMVVMGMDGAAAAPNTNFVSSACNTQKIPSGNPFFTNLRAMLADLKQNTAFSGFDYKTSRAGSGGAPTAYGRAICKSSISQSDCSACLSNLVGRIWGICSNAIGARVQLTDCFIQYEQHSF.

Residues 1 to 32 (MSISSKFQLRSSTSLLLLVALMVVMGMDGAAA) form the signal peptide. The region spanning 36 to 141 (TNFVSSACNT…CFIQYEQHSF (106 aa)) is the Gnk2-homologous domain. Disulfide bonds link Cys43-Cys119, Cys95-Cys104, and Cys107-Cys132. Asn44 is an alpha-D-mannopyranose binding site. Residues Arg126 and Glu137 each coordinate alpha-D-mannopyranose.

Exerts antifungal activity through its carbohydrate-binding specificity. This Picea glauca (White spruce) protein is Antifungal protein ginkbilobin-like protein 1.